Consider the following 124-residue polypeptide: ATP synthase epsilon chain (124 aa).

Positions 99-118 (LEQAKTEGDAHAERRADVRL) are enriched in basic and acidic residues. The disordered stretch occupies residues 99–124 (LEQAKTEGDAHAERRADVRLRAAAGR).

The protein belongs to the ATPase epsilon chain family. F-type ATPases have 2 components, CF(1) - the catalytic core - and CF(0) - the membrane proton channel. CF(1) has five subunits: alpha(3), beta(3), gamma(1), delta(1), epsilon(1). CF(0) has three main subunits: a, b and c.

The protein resides in the cell membrane. Produces ATP from ADP in the presence of a proton gradient across the membrane. In Streptomyces coelicolor (strain ATCC BAA-471 / A3(2) / M145), this protein is ATP synthase epsilon chain (atpC).